The chain runs to 545 residues: SLAIN motif-containing protein 1 (545 aa).

The stretch at 14–53 (TTNGLVANAELEVKKLQELVRKLEKQNEQLRNRASAVSNC) forms a coiled coil. Low complexity-rich tracts occupy residues 268–286 (TTSTCSSVSRPRSSFSLYS) and 466–481 (IPSSTSLQSLSSSGIP). Disordered regions lie at residues 268–342 (TTST…IRDC) and 461–526 (QGGS…LQPP). A compositionally biased stretch (polar residues) spans 503–522 (STANGSSIPRSKIAQPQRSF).

Belongs to the SLAIN motif-containing family.

The protein localises to the cytoplasm. It localises to the cytoskeleton. In terms of biological role, microtubule plus-end tracking protein that might be involved in the regulation of cytoplasmic microtubule dynamics, microtubule organization and microtubule elongation. This chain is SLAIN motif-containing protein 1 (slain1), found in Xenopus tropicalis (Western clawed frog).